A 333-amino-acid chain; its full sequence is Mitochondrial 2-oxoglutarate/malate carrier protein (333 aa).

Solcar repeat units follow at residues 29–127 (FRLI…LFER), 136–227 (PGFL…SKQF), and 236–325 (DNIL…MNKA). 6 helical membrane-spanning segments follow: residues 30 to 61 (RLIA…VQPL), 102 to 120 (GLSA…RLGI), 138 to 159 (FLLK…GTPA), 202 to 221 (GCIP…LASY), 241 to 259 (HFCA…SMPV), and 300 to 319 (GFTP…FIFL).

Belongs to the mitochondrial carrier (TC 2.A.29) family. As to quaternary structure, interacts with SMIM26.

Its subcellular location is the membrane. The enzyme catalyses (S)-malate(in) + 2-oxoglutarate(out) = (S)-malate(out) + 2-oxoglutarate(in). It carries out the reaction malonate(in) + 2-oxoglutarate(out) = malonate(out) + 2-oxoglutarate(in). The catalysed reaction is succinate(in) + 2-oxoglutarate(out) = succinate(out) + 2-oxoglutarate(in). It catalyses the reaction maleate(in) + 2-oxoglutarate(out) = maleate(out) + 2-oxoglutarate(in). The enzyme catalyses oxaloacetate(in) + 2-oxoglutarate(out) = oxaloacetate(out) + 2-oxoglutarate(in). In terms of biological role, catalyzes the transport of 2-oxoglutarate (alpha-oxoglutarate) across the inner mitochondrial membrane in an electroneutral exchange for malate. Can also exchange 2-oxoglutarate for other dicarboxylic acids such as malonate, succinate, maleate and oxaloacetate, although with lower affinity. Contributes to several metabolic processes, including the malate-aspartate shuttle, the oxoglutarate/isocitrate shuttle, in gluconeogenesis from lactate, and in nitrogen metabolism. Maintains mitochondrial fusion and fission events, and the organization and morphology of cristae. Involved in the regulation of apoptosis. Helps protect from cytotoxic-induced apoptosis by modulating glutathione levels in mitochondria. The sequence is that of Mitochondrial 2-oxoglutarate/malate carrier protein (SLC25A11) from Sus scrofa (Pig).